A 293-amino-acid chain; its full sequence is Taste receptor type 2 member 143 (293 aa).

Over 1 to 6 (MPSTPT) the chain is Extracellular. A helical transmembrane segment spans residues 7–27 (LIFIIIFYLVSLASMLQNGFM). Topologically, residues 28-55 (MIVLGREWMRNRTLPAADMIVASLASSR) are cytoplasmic. A helical membrane pass occupies residues 56-76 (FCLHGIAILANLLASFDFCYQ). The Extracellular portion of the chain corresponds to 77-79 (ANL). The chain crosses the membrane as a helical span at residues 80 to 100 (IGILWDFTNTLIFWLTAWLAI). The Cytoplasmic segment spans residues 101–127 (FYCVKISSFSHPVLFWLKWRISQLVPR). Residues 128–148 (LLVVSLIIGGLSAVISATGNF) form a helical membrane-spanning segment. The Extracellular portion of the chain corresponds to 149 to 181 (MANQMTISQGFHGNCTFGHMSLDFYRYYYLYHS). N-linked (GlcNAc...) asparagine glycosylation occurs at Asn162. The helical transmembrane segment at 182 to 202 (VLMWFTPFFLFLVSVIVLMFS) threads the bilayer. The Cytoplasmic portion of the chain corresponds to 203 to 227 (LYQHVEKMRGHRPGPWDLHTQAHTM). A helical membrane pass occupies residues 228–248 (ALKSLTFFFIFYIFFFLALVI). The Extracellular portion of the chain corresponds to 249 to 264 (SSTKRKSMQSYYWARE). Residues 265–285 (AIIYTGIFLNSIILLFSNPKL) form a helical membrane-spanning segment. The Cytoplasmic segment spans residues 286–293 (RKALKMRF).

It belongs to the G-protein coupled receptor T2R family.

It localises to the membrane. Its function is as follows. Putative taste receptor which may play a role in the perception of bitterness. This is Taste receptor type 2 member 143 (Tas2r143) from Mus musculus (Mouse).